Here is a 192-residue protein sequence, read N- to C-terminus: Phosphoheptose isomerase (192 aa).

Positions 34-192 (VVDAYRAGNK…VERELFLKGN (159 aa)) constitute an SIS domain. Residue 49-51 (NGG) coordinates substrate. Zn(2+) contacts are provided by His-58 and Glu-62. Residues Glu-62, 91–92 (ND), 117–119 (STS), Ser-122, and Gln-169 each bind substrate. Residues Gln-169 and His-177 each coordinate Zn(2+).

It belongs to the SIS family. GmhA subfamily. In terms of assembly, homotetramer. It depends on Zn(2+) as a cofactor.

It is found in the cytoplasm. It catalyses the reaction 2 D-sedoheptulose 7-phosphate = D-glycero-alpha-D-manno-heptose 7-phosphate + D-glycero-beta-D-manno-heptose 7-phosphate. It participates in carbohydrate biosynthesis; D-glycero-D-manno-heptose 7-phosphate biosynthesis; D-glycero-alpha-D-manno-heptose 7-phosphate and D-glycero-beta-D-manno-heptose 7-phosphate from sedoheptulose 7-phosphate: step 1/1. In terms of biological role, catalyzes the isomerization of sedoheptulose 7-phosphate in D-glycero-D-manno-heptose 7-phosphate. This Geobacter sp. (strain M21) protein is Phosphoheptose isomerase.